Reading from the N-terminus, the 440-residue chain is Ferredoxin--NADP reductase (440 aa).

Residues 17-75 form the CpcD-like domain; the sequence is SRVFVYEVVGMRQNEETDQTNYPIRKSGSVFIRVPYNRMNQEMQRITRLGGKIVSIQTV. Residues 98–142 are disordered; that stretch reads AKSEGNGKATPVKTDSGAKGFAKPPAEEQLKKKDNKGNTMTQAKA. Positions 122–133 are enriched in basic and acidic residues; sequence PAEEQLKKKDNK. Residues 155–279 form the FAD-binding FR-type domain; it reads NAPFIGKVIS…TGPVGKEMLL (125 aa). FAD-binding positions include 214-217, 235-237, Tyr-241, 253-255, and Thr-294; these read RLYS, CVR, and VCS. NADP(+)-binding residues include Ser-217 and Arg-237. Residues Thr-294, 330-331, 360-361, 370-374, 399-400, and Glu-438 contribute to the NADP(+) site; these read VP, SR, RMYIQ, and GL.

Belongs to the ferredoxin--NADP reductase type 1 family. Requires FAD as cofactor.

It localises to the cellular thylakoid membrane. It carries out the reaction 2 reduced [2Fe-2S]-[ferredoxin] + NADP(+) + H(+) = 2 oxidized [2Fe-2S]-[ferredoxin] + NADPH. The protein is Ferredoxin--NADP reductase (petH) of Nostoc sp. (strain PCC 7120 / SAG 25.82 / UTEX 2576).